We begin with the raw amino-acid sequence, 354 residues long: uncharacterized protein (354 aa).

Disordered regions lie at residues 1–74 and 87–115; these read MGTK…ENCR and SESG…QRAS. Lys-19 is modified (N6-acetyllysine). Residues 32–41 show a composition bias toward low complexity; it reads EGPSSNSSFH. Residues 45-54 are compositionally biased toward acidic residues; that stretch reads EEGTDLEGDM. Phosphoserine is present on residues Ser-115 and Ser-174. Polar residues predominate over residues 182-199; that stretch reads QGSSQDLPMQANLSQSNE. Disordered regions lie at residues 182–208 and 235–298; these read QGSS…GRDR and QVAD…DELS. The residue at position 291 (Tyr-291) is a Phosphotyrosine. A Phosphoserine modification is found at Ser-292.

This is an uncharacterized protein from Mus musculus (Mouse).